The chain runs to 69 residues: Alpha-conotoxin-like Tx1 (69 aa).

A signal peptide spans 1-21; that stretch reads MGMRMMFVVFLLVVLASTVVS. A propeptide spanning residues 22–49 is cleaved from the precursor; that stretch reads STSGRRAFHGRNAAAKASGLVSLTDRRP. Disulfide bonds link C51/C57 and C52/C65. The tract at residues 53-55 is ser-Xaa-Pro motif, crucial for potent interaction with nAChR; that stretch reads SDP. G66 carries the glycine amide modification.

It belongs to the conotoxin A superfamily. Expressed by the venom duct.

Its subcellular location is the secreted. In terms of biological role, alpha-conotoxins act on postsynaptic membranes, they bind to the nicotinic acetylcholine receptors (nAChR) and thus inhibit them. The polypeptide is Alpha-conotoxin-like Tx1 (Conus textile (Cloth-of-gold cone)).